The following is a 179-amino-acid chain: ATP synthase subunit b (179 aa).

Residues 13 to 33 (IHIDELVFGLIAFAVIFALVY) traverse the membrane as a helical segment.

Belongs to the ATPase B chain family. F-type ATPases have 2 components, F(1) - the catalytic core - and F(0) - the membrane proton channel. F(1) has five subunits: alpha(3), beta(3), gamma(1), delta(1), epsilon(1). F(0) has three main subunits: a(1), b(2) and c(10-14). The alpha and beta chains form an alternating ring which encloses part of the gamma chain. F(1) is attached to F(0) by a central stalk formed by the gamma and epsilon chains, while a peripheral stalk is formed by the delta and b chains.

It localises to the cell membrane. F(1)F(0) ATP synthase produces ATP from ADP in the presence of a proton or sodium gradient. F-type ATPases consist of two structural domains, F(1) containing the extramembraneous catalytic core and F(0) containing the membrane proton channel, linked together by a central stalk and a peripheral stalk. During catalysis, ATP synthesis in the catalytic domain of F(1) is coupled via a rotary mechanism of the central stalk subunits to proton translocation. Functionally, component of the F(0) channel, it forms part of the peripheral stalk, linking F(1) to F(0). This Thermobifida fusca (strain YX) protein is ATP synthase subunit b.